Reading from the N-terminus, the 225-residue chain is Lipoarabinomannan carrier protein LprG (225 aa).

Positions 1-21 (MRNRIRLALIPVAVAAIALAG) are cleaved as a signal peptide. A lipid anchor (N-palmitoyl cysteine) is attached at Cys22. The S-diacylglycerol cysteine moiety is linked to residue Cys22.

It belongs to the LppX/LprAFG lipoprotein family. In terms of processing, modified by Lgt on Cys-22 with an S-linked diacylglyceral, signal peptide is removed by LspA, Cys-22 is further modifed with a fatty acid on its amino group by Lnt yielding a triacylated protein.

The protein localises to the cell inner membrane. In terms of biological role, helps membrane protein MAB_2807 (P55) transport triacylglycerides (TAG) across the inner cell membrane into the periplasm and probably ultimately to the outer membrane. Binds TAG in its hydrophobic cavity and transfers it between lipid bilayers. TAG probably regulates lipid metabolism and growth regulation and plays a structural role in the outer membrane. Also binds mannosides, lipoarabinomannan and lipomannan and various glycolipids in the same cavity. The polypeptide is Lipoarabinomannan carrier protein LprG (Mycobacteroides abscessus (strain ATCC 19977 / DSM 44196 / CCUG 20993 / CIP 104536 / JCM 13569 / NCTC 13031 / TMC 1543 / L948) (Mycobacterium abscessus)).